The sequence spans 91 residues: Putative membrane protein insertion efficiency factor (91 aa).

This sequence belongs to the UPF0161 family.

Its subcellular location is the cell inner membrane. Could be involved in insertion of integral membrane proteins into the membrane. This chain is Putative membrane protein insertion efficiency factor, found in Saccharophagus degradans (strain 2-40 / ATCC 43961 / DSM 17024).